Consider the following 195-residue polypeptide: Holliday junction branch migration complex subunit RuvA (195 aa).

The tract at residues 1-63 (MIASVRGEVL…EDSQTLYGFA (63 aa)) is domain I. The domain II stretch occupies residues 64-138 (DSDARDLFLT…DKVGSSTSSG (75 aa)). Residues 138–142 (GVAAA) are flexible linker. A domain III region spans residues 143–195 (GGHGIRGPVVEALVGLGFAVKQAEEATDKVLANDPEATTSSALRAALSMLGKK).

It belongs to the RuvA family. In terms of assembly, homotetramer. Forms an RuvA(8)-RuvB(12)-Holliday junction (HJ) complex. HJ DNA is sandwiched between 2 RuvA tetramers; dsDNA enters through RuvA and exits via RuvB. An RuvB hexamer assembles on each DNA strand where it exits the tetramer. Each RuvB hexamer is contacted by two RuvA subunits (via domain III) on 2 adjacent RuvB subunits; this complex drives branch migration. In the full resolvosome a probable DNA-RuvA(4)-RuvB(12)-RuvC(2) complex forms which resolves the HJ.

Its subcellular location is the cytoplasm. Functionally, the RuvA-RuvB-RuvC complex processes Holliday junction (HJ) DNA during genetic recombination and DNA repair, while the RuvA-RuvB complex plays an important role in the rescue of blocked DNA replication forks via replication fork reversal (RFR). RuvA specifically binds to HJ cruciform DNA, conferring on it an open structure. The RuvB hexamer acts as an ATP-dependent pump, pulling dsDNA into and through the RuvAB complex. HJ branch migration allows RuvC to scan DNA until it finds its consensus sequence, where it cleaves and resolves the cruciform DNA. The chain is Holliday junction branch migration complex subunit RuvA from Mycolicibacterium gilvum (strain PYR-GCK) (Mycobacterium gilvum (strain PYR-GCK)).